The chain runs to 740 residues: 1,4-alpha-glucan branching enzyme GlgB (740 aa).

Catalysis depends on Asp419, which acts as the Nucleophile. The Proton donor role is filled by Glu472.

Belongs to the glycosyl hydrolase 13 family. GlgB subfamily. As to quaternary structure, monomer.

The catalysed reaction is Transfers a segment of a (1-&gt;4)-alpha-D-glucan chain to a primary hydroxy group in a similar glucan chain.. Its pathway is glycan biosynthesis; glycogen biosynthesis. Catalyzes the formation of the alpha-1,6-glucosidic linkages in glycogen by scission of a 1,4-alpha-linked oligosaccharide from growing alpha-1,4-glucan chains and the subsequent attachment of the oligosaccharide to the alpha-1,6 position. This chain is 1,4-alpha-glucan branching enzyme GlgB, found in Thiobacillus denitrificans (strain ATCC 25259 / T1).